The sequence spans 784 residues: Toll-like receptor 2 (784 aa).

An N-terminal signal peptide occupies residues M1 to S18. Residues K19 to R587 lie on the Extracellular side of the membrane. C30 and C36 form a disulfide bridge. LRR repeat units follow at residues V54–N77, L78–R101, L102–S125, L126–K150, L151–F175, L176–N199, V200–S223, V224–L250, I251–G278, L279–K308, V309–R337, V338–S361, L362–S388, L389–N414, L415–K437, M438–K457, T458–Q478, L479–M500, and L501–T524. N-linked (GlcNAc...) asparagine glycosylation is present at N114. Residue N199 is glycosylated (N-linked (GlcNAc...) asparagine). Cysteines 353 and 382 form a disulfide. N414 carries N-linked (GlcNAc...) asparagine glycosylation. C432 and C454 form a disulfide bridge. N442 is a glycosylation site (N-linked (GlcNAc...) asparagine). The 55-residue stretch at L525–R579 folds into the LRRCT domain. A helical transmembrane segment spans residues A588 to L608. The Cytoplasmic segment spans residues C609–S784. The TIR domain maps to I639–I782. A Glycyl lysine isopeptide (Lys-Gly) (interchain with G-Cter in ubiquitin) cross-link involves residue K754. The ATG16L1-binding motif motif lies at Y761–L778.

The protein belongs to the Toll-like receptor family. In terms of assembly, interacts with LY96, TLR1 and TLR6 (via extracellular domain). TLR2 seems to exist in heterodimers with either TLR1 or TLR6 before stimulation by the ligand. The heterodimers form bigger oligomers in response to their corresponding ligands as well as further heterotypic associations with other receptors such as CD14 and/or CD36. Binds MYD88 (via TIR domain). Interacts with TICAM1. Interacts with CNPY3. Interacts with ATG16L1. Interacts with PPP1R11. Interacts with TICAM2. Interacts with TIRAP. In terms of processing, ubiquitinated at Lys-754 by PPP1R11, leading to its degradation. Deubiquitinated by USP2. Post-translationally, glycosylation of Asn-442 is critical for secretion of the N-terminal ectodomain of TLR2.

The protein localises to the membrane. Its subcellular location is the cytoplasmic vesicle. The protein resides in the phagosome membrane. It localises to the membrane raft. Cooperates with LY96 to mediate the innate immune response to bacterial lipoproteins and other microbial cell wall components. Cooperates with TLR1 or TLR6 to mediate the innate immune response to bacterial lipoproteins or lipopeptides. Acts via MYD88 and TRAF6, leading to NF-kappa-B activation, cytokine secretion and the inflammatory response. May also promote apoptosis in response to lipoproteins. Forms activation clusters composed of several receptors depending on the ligand, these clusters trigger signaling from the cell surface and subsequently are targeted to the Golgi in a lipid-raft dependent pathway. Forms the cluster TLR2:TLR6:CD14:CD36 in response to diacylated lipopeptides and TLR2:TLR1:CD14 in response to triacylated lipopeptides. The protein is Toll-like receptor 2 (TLR2) of Macaca fascicularis (Crab-eating macaque).